The following is a 399-amino-acid chain: Elongation factor Tu (399 aa).

The region spanning 10-207 is the tr-type G domain; that stretch reads KPHVNVGTIG…ALDSYIPEPV (198 aa). The interval 19–26 is G1; sequence GHIDHGKT. 19 to 26 lines the GTP pocket; sequence GHIDHGKT. Threonine 26 is a Mg(2+) binding site. A G2 region spans residues 60–64; that stretch reads GITIN. The interval 81 to 84 is G3; sequence DCPG. GTP is bound by residues 81-85 and 136-139; these read DCPGH and NKVD. A G4 region spans residues 136–139; that stretch reads NKVD. The tract at residues 174 to 176 is G5; sequence SAL.

This sequence belongs to the TRAFAC class translation factor GTPase superfamily. Classic translation factor GTPase family. EF-Tu/EF-1A subfamily. Monomer.

It localises to the cytoplasm. It catalyses the reaction GTP + H2O = GDP + phosphate + H(+). GTP hydrolase that promotes the GTP-dependent binding of aminoacyl-tRNA to the A-site of ribosomes during protein biosynthesis. This chain is Elongation factor Tu, found in Pseudothermotoga lettingae (strain ATCC BAA-301 / DSM 14385 / NBRC 107922 / TMO) (Thermotoga lettingae).